A 390-amino-acid polypeptide reads, in one-letter code: MRYLTAGESHGPQLTTIIEGVPAGLYITEEDINFELARRQKGHGRGRRMQIETDRAKITSGVRHARTLGSPIALVVENKDWTHWTKIMGAAPITEEEESEMKRQISRPRPGHADLNGAIKYNHRDMRNVLERSSARETTVRVAAGAVAKKILAELGIKVAGHVLQIGSVKAEKTDYTSIEDLKRVTEESPVRCYDEEAGRQMMAAIDEAKANGDSIGGIVEVIVEGMPVGVGSYVHYDRKLDSKLAAAVLSINAFKGVEFGIGFEAAGKNGSEVHDEIVWDEEKGYTRATNRLGGLEGGMTTGMPIVVRGVMKPIPTLYKPLKSVDIETKEPFTASIERSDSCAVPAASVVAEAAVAWEIANAVVEQFGLDQIDRIKENVENMKKLSREF.

Arg-39 and Arg-45 together coordinate NADP(+). Residues 132–134 (RSS), 253–254 (NA), Gly-298, 313–317 (KPIPT), and Arg-339 contribute to the FMN site.

It belongs to the chorismate synthase family. As to quaternary structure, homotetramer. It depends on FMNH2 as a cofactor.

The catalysed reaction is 5-O-(1-carboxyvinyl)-3-phosphoshikimate = chorismate + phosphate. Its pathway is metabolic intermediate biosynthesis; chorismate biosynthesis; chorismate from D-erythrose 4-phosphate and phosphoenolpyruvate: step 7/7. Catalyzes the anti-1,4-elimination of the C-3 phosphate and the C-6 proR hydrogen from 5-enolpyruvylshikimate-3-phosphate (EPSP) to yield chorismate, which is the branch point compound that serves as the starting substrate for the three terminal pathways of aromatic amino acid biosynthesis. This reaction introduces a second double bond into the aromatic ring system. This chain is Chorismate synthase, found in Bacillus velezensis (strain DSM 23117 / BGSC 10A6 / LMG 26770 / FZB42) (Bacillus amyloliquefaciens subsp. plantarum).